The primary structure comprises 278 residues: Elongation factor Ts (278 aa).

Residues 82–85 form an involved in Mg(2+) ion dislocation from EF-Tu region; the sequence is TDFV.

Belongs to the EF-Ts family.

It is found in the cytoplasm. Functionally, associates with the EF-Tu.GDP complex and induces the exchange of GDP to GTP. It remains bound to the aminoacyl-tRNA.EF-Tu.GTP complex up to the GTP hydrolysis stage on the ribosome. This Streptomyces ramocissimus protein is Elongation factor Ts (tsf).